A 420-amino-acid chain; its full sequence is Glycerol-3-phosphate dehydrogenase [NAD(+)] 2, chloroplastic (420 aa).

The transit peptide at 1-45 (MAASVQPACLDLHFSGKHPPLLKHNAIIVRCVSSPNVIPEADSIS) directs the protein to the chloroplast. NAD(+) is bound by residues 94 to 99 (GGGSFG), F171, K194, and A228. A substrate-binding site is contributed by K194. Catalysis depends on K279, which acts as the Proton acceptor. NAD(+) contacts are provided by R343 and E369. 343–344 (RN) serves as a coordination point for substrate.

It belongs to the NAD-dependent glycerol-3-phosphate dehydrogenase family.

The protein resides in the plastid. The protein localises to the chloroplast. It carries out the reaction sn-glycerol 3-phosphate + NAD(+) = dihydroxyacetone phosphate + NADH + H(+). It participates in membrane lipid metabolism; glycerophospholipid metabolism. In terms of biological role, required to supply glycerol-3-phosphate in the chloroplast for the synthesis of glycerolipids. Required for activation of systemic acquired resistance (SAR). Provision of glycerol-3-phosphate may be involved in generating lipid signals necessary for mediating defense responses and SAR. This Arabidopsis thaliana (Mouse-ear cress) protein is Glycerol-3-phosphate dehydrogenase [NAD(+)] 2, chloroplastic (GLY1).